The sequence spans 165 residues: Methyl-coenzyme M reductase II operon protein D (165 aa).

As to quaternary structure, MCR is composed of three subunits: alpha, beta, and gamma. The function of protein D is not known.

The protein is Methyl-coenzyme M reductase II operon protein D (mrtD) of Methanothermus fervidus (strain ATCC 43054 / DSM 2088 / JCM 10308 / V24 S).